The chain runs to 311 residues: Aspartate carbamoyltransferase catalytic subunit (311 aa).

Carbamoyl phosphate-binding residues include Arg-55 and Thr-56. Lys-85 lines the L-aspartate pocket. Residues Arg-106, His-135, and Gln-138 each coordinate carbamoyl phosphate. The L-aspartate site is built by Arg-168 and Arg-230. Carbamoyl phosphate-binding residues include Leu-268 and Pro-269.

Belongs to the aspartate/ornithine carbamoyltransferase superfamily. ATCase family. Heterododecamer (2C3:3R2) of six catalytic PyrB chains organized as two trimers (C3), and six regulatory PyrI chains organized as three dimers (R2).

The catalysed reaction is carbamoyl phosphate + L-aspartate = N-carbamoyl-L-aspartate + phosphate + H(+). It functions in the pathway pyrimidine metabolism; UMP biosynthesis via de novo pathway; (S)-dihydroorotate from bicarbonate: step 2/3. Functionally, catalyzes the condensation of carbamoyl phosphate and aspartate to form carbamoyl aspartate and inorganic phosphate, the committed step in the de novo pyrimidine nucleotide biosynthesis pathway. This is Aspartate carbamoyltransferase catalytic subunit from Salmonella paratyphi A (strain AKU_12601).